The primary structure comprises 302 residues: tRNA dimethylallyltransferase (302 aa).

ATP is bound at residue 21-28 (GPTASGKS). Position 23–28 (23–28 (TASGKS)) interacts with substrate.

Belongs to the IPP transferase family. In terms of assembly, monomer. It depends on Mg(2+) as a cofactor.

The catalysed reaction is adenosine(37) in tRNA + dimethylallyl diphosphate = N(6)-dimethylallyladenosine(37) in tRNA + diphosphate. Functionally, catalyzes the transfer of a dimethylallyl group onto the adenine at position 37 in tRNAs that read codons beginning with uridine, leading to the formation of N6-(dimethylallyl)adenosine (i(6)A). The chain is tRNA dimethylallyltransferase from Paracoccus denitrificans (strain Pd 1222).